The following is a 271-amino-acid chain: Chymotrypsin-like elastase family member 2A (271 aa).

A signal peptide spans 1–16 (MIRTLLLSALVAGALS). The propeptide at 17–30 (CGYPTYEVQHDVSR) is activation peptide. Residues 31-269 (VVGGQEASPN…YIDWINSVIA (239 aa)) enclose the Peptidase S1 domain. Cys60 and Cys76 are disulfide-bonded. Catalysis depends on charge relay system residues His75 and Asp123. Disulfide bonds link Cys157–Cys224, Cys188–Cys204, and Cys214–Cys245. Ser218 (charge relay system) is an active-site residue.

This sequence belongs to the peptidase S1 family. Elastase subfamily. Interacts with CPA1. Interacts with SERPINA1. As to expression, pancreas.

The protein resides in the secreted. The catalysed reaction is Preferential cleavage: Leu-|-Xaa, Met-|-Xaa and Phe-|-Xaa. Hydrolyzes elastin.. In terms of biological role, elastase that enhances insulin signaling and might have a physiologic role in cellular glucose metabolism. Circulates in plasma and reduces platelet hyperactivation, triggers both insulin secretion and degradation, and increases insulin sensitivity. The chain is Chymotrypsin-like elastase family member 2A (Cela2a) from Rattus norvegicus (Rat).